The primary structure comprises 353 residues: Fe(3+) ions import ATP-binding protein FbpC (353 aa).

One can recognise an ABC transporter domain in the interval 9 to 239 (VTFENVTKKF…PASAFIADFM (231 aa)). 41–48 (GLSGCGKT) is a binding site for ATP.

The protein belongs to the ABC transporter superfamily. Fe(3+) ion importer (TC 3.A.1.10) family. As to quaternary structure, the complex is composed of two ATP-binding proteins (FbpC), two transmembrane proteins (FbpB) and a solute-binding protein (FbpA).

It is found in the cell inner membrane. It catalyses the reaction Fe(3+)(out) + ATP + H2O = Fe(3+)(in) + ADP + phosphate + H(+). Functionally, part of the ABC transporter complex FbpABC involved in Fe(3+) ions import. Responsible for energy coupling to the transport system. The chain is Fe(3+) ions import ATP-binding protein FbpC from Brucella melitensis biotype 1 (strain ATCC 23456 / CCUG 17765 / NCTC 10094 / 16M).